A 578-amino-acid chain; its full sequence is Triokinase/FMN cyclase (578 aa).

In terms of domain architecture, DhaK spans 9 to 336; sequence SVEGCAGDAL…IDAETNAKAW (328 aa). Residues 56–59, Lys109, and Asp114 each bind dihydroxyacetone; that span reads GSGH. The active-site Tele-hemiaminal-histidine intermediate is His221. The DhaL domain occupies 372-571; the sequence is KQMTLVLDRI…AAAIFRAILE (200 aa). Residues 401–404, 446–447, Gly486, and 494–495 each bind ATP; these read DGDC, SS, and TM. A phosphoserine mark is found at Ser511 and Ser545. ATP is bound at residue 556 to 558; the sequence is DPG.

The protein belongs to the dihydroxyacetone kinase (DAK) family. Homodimer. Interacts with IFIH1 (via the CARD domains), the interaction is inhibited by viral infection. The cofactor is Mg(2+). Requires Mn(2+) as cofactor. Co(2+) serves as cofactor.

It catalyses the reaction dihydroxyacetone + ATP = dihydroxyacetone phosphate + ADP + H(+). It carries out the reaction D-glyceraldehyde + ATP = D-glyceraldehyde 3-phosphate + ADP + H(+). The enzyme catalyses FAD = riboflavin cyclic-4',5'-phosphate + AMP + H(+). With respect to regulation, each activity is inhibited by the substrate(s) of the other. Its function is as follows. Catalyzes both the phosphorylation of dihydroxyacetone and of glyceraldehyde, and the splitting of ribonucleoside diphosphate-X compounds among which FAD is the best substrate. Represses IFIH1-mediated cellular antiviral response. The polypeptide is Triokinase/FMN cyclase (Tkfc) (Rattus norvegicus (Rat)).